Reading from the N-terminus, the 451-residue chain is D-inositol 3-phosphate glycosyltransferase (451 aa).

H37 serves as a coordination point for 1D-myo-inositol 3-phosphate. Residues 43-44 (QP) and G51 contribute to the UDP-N-acetyl-alpha-D-glucosamine site. Residues 48–53 (DAGGMN), K106, Y138, T162, and R182 contribute to the 1D-myo-inositol 3-phosphate site. Positions 259, 264, and 323 each coordinate UDP-N-acetyl-alpha-D-glucosamine. Y332, R333, and A335 together coordinate Mg(2+). Residues E345 and E353 each contribute to the UDP-N-acetyl-alpha-D-glucosamine site. T359 is a binding site for Mg(2+).

It belongs to the glycosyltransferase group 1 family. MshA subfamily. In terms of assembly, homodimer.

The enzyme catalyses 1D-myo-inositol 3-phosphate + UDP-N-acetyl-alpha-D-glucosamine = 1D-myo-inositol 2-acetamido-2-deoxy-alpha-D-glucopyranoside 3-phosphate + UDP + H(+). In terms of biological role, catalyzes the transfer of a N-acetyl-glucosamine moiety to 1D-myo-inositol 3-phosphate to produce 1D-myo-inositol 2-acetamido-2-deoxy-glucopyranoside 3-phosphate in the mycothiol biosynthesis pathway. The protein is D-inositol 3-phosphate glycosyltransferase of Corynebacterium kroppenstedtii (strain DSM 44385 / JCM 11950 / CIP 105744 / CCUG 35717).